Reading from the N-terminus, the 132-residue chain is Large ribosomal subunit protein uL14 (132 aa).

Belongs to the universal ribosomal protein uL14 family. As to quaternary structure, part of the 50S ribosomal subunit. Forms a cluster with proteins L3 and L24e, part of which may contact the 16S rRNA in 2 intersubunit bridges.

Its function is as follows. Binds to 23S rRNA. Forms part of two intersubunit bridges in the 70S ribosome. The sequence is that of Large ribosomal subunit protein uL14 from Methanococcus maripaludis (strain DSM 14266 / JCM 13030 / NBRC 101832 / S2 / LL).